We begin with the raw amino-acid sequence, 60 residues long: Large ribosomal subunit protein bL32 (60 aa).

This sequence belongs to the bacterial ribosomal protein bL32 family.

The chain is Large ribosomal subunit protein bL32 from Ehrlichia ruminantium (strain Gardel).